The primary structure comprises 585 residues: 2-succinyl-5-enolpyruvyl-6-hydroxy-3-cyclohexene-1-carboxylate synthase (585 aa).

Belongs to the TPP enzyme family. MenD subfamily. In terms of assembly, homodimer. It depends on Mg(2+) as a cofactor. Mn(2+) is required as a cofactor. The cofactor is thiamine diphosphate.

The enzyme catalyses isochorismate + 2-oxoglutarate + H(+) = 5-enolpyruvoyl-6-hydroxy-2-succinyl-cyclohex-3-ene-1-carboxylate + CO2. It participates in quinol/quinone metabolism; 1,4-dihydroxy-2-naphthoate biosynthesis; 1,4-dihydroxy-2-naphthoate from chorismate: step 2/7. The protein operates within cofactor biosynthesis; phylloquinone biosynthesis. In terms of biological role, catalyzes the thiamine diphosphate-dependent decarboxylation of 2-oxoglutarate and the subsequent addition of the resulting succinic semialdehyde-thiamine pyrophosphate anion to isochorismate to yield 2-succinyl-5-enolpyruvyl-6-hydroxy-3-cyclohexene-1-carboxylate (SEPHCHC). This Crocosphaera subtropica (strain ATCC 51142 / BH68) (Cyanothece sp. (strain ATCC 51142)) protein is 2-succinyl-5-enolpyruvyl-6-hydroxy-3-cyclohexene-1-carboxylate synthase.